We begin with the raw amino-acid sequence, 310 residues long: HPr kinase/phosphorylase (310 aa).

Residues His138 and Lys159 contribute to the active site. 153-160 (GSSGVGKS) is an ATP binding site. Ser160 provides a ligand contact to Mg(2+). Asp177 acts as the Proton acceptor; for phosphorylation activity. Proton donor; for dephosphorylation activity in catalysis. Positions 201-210 (LEIRGLGIIN) are important for the catalytic mechanism of both phosphorylation and dephosphorylation. Glu202 provides a ligand contact to Mg(2+). Arg243 is an active-site residue. Residues 264 to 269 (PVRPGR) are important for the catalytic mechanism of dephosphorylation.

Belongs to the HPrK/P family. In terms of assembly, homohexamer. Mg(2+) is required as a cofactor.

The enzyme catalyses [HPr protein]-L-serine + ATP = [HPr protein]-O-phospho-L-serine + ADP + H(+). It carries out the reaction [HPr protein]-O-phospho-L-serine + phosphate + H(+) = [HPr protein]-L-serine + diphosphate. Catalyzes the ATP- as well as the pyrophosphate-dependent phosphorylation of a specific serine residue in HPr, a phosphocarrier protein of the phosphoenolpyruvate-dependent sugar phosphotransferase system (PTS). HprK/P also catalyzes the pyrophosphate-producing, inorganic phosphate-dependent dephosphorylation (phosphorolysis) of seryl-phosphorylated HPr (P-Ser-HPr). The two antagonistic activities of HprK/P are regulated by several intracellular metabolites, which change their concentration in response to the absence or presence of rapidly metabolisable carbon sources (glucose, fructose, etc.) in the growth medium. Also phosphorylates/dephosphorylates the HPr-like catabolite repression protein crh on a specific serine residue. Therefore, by controlling the phosphorylation state of HPr and crh, HPrK/P is a sensor enzyme that plays a major role in the regulation of carbon metabolism and sugar transport: it mediates carbon catabolite repression (CCR), and regulates PTS-catalyzed carbohydrate uptake and inducer exclusion. The chain is HPr kinase/phosphorylase (hprK) from Halalkalibacterium halodurans (strain ATCC BAA-125 / DSM 18197 / FERM 7344 / JCM 9153 / C-125) (Bacillus halodurans).